The chain runs to 363 residues: Probable aminomethyltransferase (363 aa).

It belongs to the GcvT family. The glycine cleavage system is composed of four proteins: P, T, L and H.

It catalyses the reaction N(6)-[(R)-S(8)-aminomethyldihydrolipoyl]-L-lysyl-[protein] + (6S)-5,6,7,8-tetrahydrofolate = N(6)-[(R)-dihydrolipoyl]-L-lysyl-[protein] + (6R)-5,10-methylene-5,6,7,8-tetrahydrofolate + NH4(+). The glycine cleavage system catalyzes the degradation of glycine. The polypeptide is Probable aminomethyltransferase (Haloarcula marismortui (strain ATCC 43049 / DSM 3752 / JCM 8966 / VKM B-1809) (Halobacterium marismortui)).